Reading from the N-terminus, the 480-residue chain is Ammonium transporter 3 member 3 (480 aa).

11 helical membrane-spanning segments follow: residues 31 to 51 (SATL…GSIV), 59 to 79 (SAFM…VWAY), 135 to 155 (MVYF…GSLL), 169 to 189 (LWIT…GFLF), 198 to 218 (GGYV…YWVG), 233 to 253 (ILLV…FNGG), 265 to 287 (AVLN…DVFF), 292 to 314 (SVIG…AGLV), 318 to 337 (AAIV…MMVL), 361 to 381 (GFLG…SLFL), and 407 to 427 (LFVT…ISLI).

The protein belongs to the ammonia transporter channel (TC 1.A.11.2) family.

Its subcellular location is the membrane. Its function is as follows. Involved in ammonium transport. This is Ammonium transporter 3 member 3 (AMT3-3) from Oryza sativa subsp. japonica (Rice).